Reading from the N-terminus, the 107-residue chain is Metallothionein-1 (107 aa).

Belongs to the metallothionein superfamily. Type 7 family.

Functionally, the metallothioneins are involved in the cellular sequestration of toxic metal ions. Binds 12 cadmium ions per molecule. This is Metallothionein-1 from Tetrahymena thermophila.